Consider the following 1275-residue polypeptide: MKLSNELFHRSSKDHGGKSRICLDSSEDTYPPHSSSPPSFQKRLSFSDFSTTRLFSPPFLSKRSNNSPHRFSYSPPQHPASINSRRVASYTVQSSPSRTTYRQLPNEPQNSAAYTTYSSFPNALFDDFSPNNPLDTDPFLTSPGNKQNTVDSFRPLPETPVSPGGSLVHPLPRPPLPSSVSSHSSPYSTTSSTSLYSLYNDISLSCSPEPYLPLSPTRSPARTPSPIRLYSSDALRPQSPLSPSVEYLTPPNPYSLKSDISSTRQLPKIPVQDYASGKISSPLITRTHRRAQSETLFSSCREPWLVGKLYKWCKEEVFTALGGLVHEGVSRREVAQVMATLFTIHIASMEFLIAEIIAKNILGDWINYGLVEVINLEKLQIAFTSNEPPSGSGVLPFLTNGGCYSYICRSRSCPSKYQCYSCRCARNSSLEFTSLPGQSSDTWSIFWNISSLNSLPSSLSKREIARQNNIHELICKESDYVADLNTLAELFRDGIVQQQDAIVPSNRVADFIQSVFGNVESIRQLHSRLFLPQLIMRERLQGPVVSIIGDILLEWIHAAKSSYINYAKQFPLADETYKLECQRNTYFARWLAACRSDPRCRRLDFQHFLQRPTQRLQRYTLELDTILKHTEQSSWDFQLITQAVKELRATCEECDAVIATVLEANRIRDLSYQLLFKNHESVNLELRDPEREFFFEGIVQRRSDSRLDWLDIHLFLLDNYLIMAKARKDKRTNASRYVVSKRPIPLDLLVLSPKMDDFQLKSNTNKFLGSLAGNLPQESLTTKSKRKSKVNLELMFDATAEKNNENSMNSAVFEKSQLYPFTIRHLGAYTASYTLYVESLQLRKLWVEKINVAKKRHSQKINIKNPFALKVVSDVAFQYPPSDLVNGNEPLNSFNEITLVEGSSIDRALNEVAWKHPIVSEELLPEPIAYGDISCIAQFNDYEGHVSVLIATSTGIFLGAFGDSSDIRDWKKISSQRRVTQLGVVEEFDILLELRDKTLYAHKLSRIIEMGLIESKIAVVIGTPHAVSFFKIGKLSEGASVKRERTLVFYKEGLGNTTTIICCEPVIGLGHNYQKTYAFKRKDVTSFRTLDDFHVTANCHSIDCFKYSIALCHNKGIDVLRLDPKLAVGFPSPSVLNDTLFRNRINNSKPLGVFRIHDPSLFACCYQFGAVFVNGEGSMVNKECWFDWIGKPNSVTSCHGYLIAFNDEFVEIWNTRTRKLNQIIQGNDIKYYPSNSDWLANGKYIMFGMVHPQYHDRHLILALNKAKTNSFIIED.

Disordered regions lie at residues 1 to 42 (MKLS…SFQK), 56 to 113 (SPPF…NSAA), 131 to 188 (NNPL…SPYS), and 214 to 248 (LSPT…VEYL). Residues 7 to 17 (LFHRSSKDHGG) are compositionally biased toward basic and acidic residues. Composition is skewed to polar residues over residues 32-42 (PHSSSPPSFQK), 80-113 (ASIN…NSAA), and 142-151 (SPGNKQNTVD). Composition is skewed to low complexity over residues 178 to 188 (SSVSSHSSPYS) and 214 to 228 (LSPT…SPIR). Ser293 carries the phosphoserine modification. The DH domain occupies 465–657 (ARQNNIHELI…RATCEECDAV (193 aa)). One can recognise a PH domain in the interval 692–855 (EFFFEGIVQR…WVEKINVAKK (164 aa)). The 310-residue stretch at 930–1239 (YGDISCIAQF…KYYPSNSDWL (310 aa)) folds into the CNH domain.

The protein localises to the cytoplasm. In terms of biological role, stimulates the exchange of Rho1 GDP-bound form into GTP-bound form. Regulates, via interaction and activation of Rho1, beta-1,3-glucan biosynthesis and cell wall integrity during septation. Involved in the regulation of contractile ring assembly. The sequence is that of Rho1 guanine nucleotide exchange factor 3 (rgf3) from Schizosaccharomyces pombe (strain 972 / ATCC 24843) (Fission yeast).